The following is a 275-amino-acid chain: MASLQTQMISFYLIFLSILLTTIFFFKVNSTETTSFSITKFSPDQKNLIFQGDGYTTKGKLTLTKAVKSTVGRALYSTPIHIWDRDTGNVANFVTSFTFVIDAPSSYNVADEFTFFIAPVDTKPQTGGGYLGVFNSKEYDKTSQTVAVEFDTFYNAAWDPSNKERHIGIDVNSIKSVNTKSWNLQNGERANVVIAFNAATNVLTVTLTYPNSLEEENVTSYTLNEVVPLKDVVPEWVRIGFSATTGAEFAAHEVHSWSFHSELGGTSSSKQAADA.

A signal peptide spans 1–30 (MASLQTQMISFYLIFLSILLTTIFFFKVNS). D-glucose-binding residues include D111 and G129. Residues E149 and D151 each coordinate Mn(2+). Positions 151, 153, 155, and 159 each coordinate Ca(2+). Mn(2+)-binding residues include D159 and H166. A propeptide spanning residues 211–217 (NSLEEEN) is cleaved from the precursor. D-glucose-binding residues include G246 and A247. A propeptide spanning residues 270-275 (KQAADA) is cleaved from the precursor.

It belongs to the leguminous lectin family. Heterotetramer of two alpha and two beta chains. Post-translationally, the mature form consists of two chains, alpha and beta, produced by cleavage of the immature protein. These remain cleaved, yet fold together to form one subunit.

Functionally, D-mannose specific lectin. This chain is Lectin, found in Lens culinaris (Lentil).